Reading from the N-terminus, the 427-residue chain is Glutamate-1-semialdehyde 2,1-aminomutase (427 aa).

Lys-267 carries the post-translational modification N6-(pyridoxal phosphate)lysine.

Belongs to the class-III pyridoxal-phosphate-dependent aminotransferase family. HemL subfamily. In terms of assembly, homodimer. Requires pyridoxal 5'-phosphate as cofactor.

It localises to the cytoplasm. It catalyses the reaction (S)-4-amino-5-oxopentanoate = 5-aminolevulinate. The protein operates within porphyrin-containing compound metabolism; protoporphyrin-IX biosynthesis; 5-aminolevulinate from L-glutamyl-tRNA(Glu): step 2/2. The chain is Glutamate-1-semialdehyde 2,1-aminomutase from Acetivibrio thermocellus (strain ATCC 27405 / DSM 1237 / JCM 9322 / NBRC 103400 / NCIMB 10682 / NRRL B-4536 / VPI 7372) (Clostridium thermocellum).